The following is a 236-amino-acid chain: Protein EVI2A (236 aa).

Positions 1-30 (MPTDMEHTGHYLHLAFLMTTVFSLSPGTKA) are cleaved as a signal peptide. 5 N-linked (GlcNAc...) asparagine glycosylation sites follow: Asn-31, Asn-38, Asn-49, Asn-73, and Asn-112. Residues 31 to 133 (NYTRLWANST…DVCAENNNNM (103 aa)) are Extracellular-facing. A helical membrane pass occupies residues 134–154 (AMLICLIIIAVLFLICTFLFL). Residues 155 to 236 (STVVLANKVS…TEKLTNKQIG (82 aa)) are Cytoplasmic-facing. Ser-211 carries the post-translational modification Phosphoserine. Positions 217-236 (ATRERKDEEGTEKLTNKQIG) are disordered. Positions 218–236 (TRERKDEEGTEKLTNKQIG) are enriched in basic and acidic residues.

The protein belongs to the EVI2A family.

It is found in the membrane. In terms of biological role, may complex with itself or/and other proteins within the membrane, to function as part of a cell-surface receptor. In Homo sapiens (Human), this protein is Protein EVI2A (EVI2A).